Here is a 652-residue protein sequence, read N- to C-terminus: Putative ankyrin repeat protein R734 (652 aa).

10 ANK repeats span residues 77 to 105 (TNDI…ANNS), 106 to 136 (EGIK…LPTE), 138 to 167 (TLRD…HLGY), 192 to 219 (NDLK…SGYE), 220 to 242 (FDNR…FFMD), 243 to 274 (IGFD…QFTQ), 307 to 337 (INDN…NINR), 396 to 430 (SDNN…DPNY), 468 to 498 (PKLT…TIYS), and 535 to 564 (TNKS…DNNL).

The sequence is that of Putative ankyrin repeat protein R734 from Acanthamoeba polyphaga mimivirus (APMV).